A 147-amino-acid polypeptide reads, in one-letter code: Adenylylsulfatase HINT1 (147 aa).

The region spanning 37–147 is the HIT domain; the sequence is IFDKIISKEI…GGRQMNWPPG (111 aa). The Histidine triad motif motif lies at 131 to 135; it reads HIHVH. The active-site Tele-AMP-histidine intermediate is the histidine 133. Position 135 (histidine 135) interacts with substrate.

It localises to the peroxisome. It is found in the plastid. Its subcellular location is the chloroplast. The enzyme catalyses adenosine 5'-phosphosulfate + H2O = sulfate + AMP + 2 H(+). Functionally, possesses adenylylsulfatase activity in vitro. The sequence is that of Adenylylsulfatase HINT1 from Arabidopsis thaliana (Mouse-ear cress).